The sequence spans 172 residues: Trypsin inhibitor DE-3 (172 aa).

Cystine bridges form between C39-C83 and C132-C139.

This sequence belongs to the protease inhibitor I3 (leguminous Kunitz-type inhibitor) family.

Functionally, inhibition of trypsin. In Erythrina latissima (Broad-leaved coral tree), this protein is Trypsin inhibitor DE-3.